The following is a 207-amino-acid chain: Small ribosomal subunit protein uS4c (207 aa).

Residues 92-156 form the S4 RNA-binding domain; it reads MRLDNILFRL…YQSIITKRIE (65 aa).

Belongs to the universal ribosomal protein uS4 family. Part of the 30S ribosomal subunit. Contacts protein S5. The interaction surface between S4 and S5 is involved in control of translational fidelity.

It localises to the plastid. Its subcellular location is the chloroplast. Functionally, one of the primary rRNA binding proteins, it binds directly to 16S rRNA where it nucleates assembly of the body of the 30S subunit. Its function is as follows. With S5 and S12 plays an important role in translational accuracy. In Equisetum pratense (Meadow horsetail), this protein is Small ribosomal subunit protein uS4c (rps4).